The sequence spans 242 residues: Lactate utilization protein A 2 (242 aa).

It belongs to the LutA/YkgE family.

Its function is as follows. Is involved in L-lactate degradation and allows cells to grow with lactate as the sole carbon source. This is Lactate utilization protein A 2 from Bacillus cereus (strain 03BB102).